Here is a 163-residue protein sequence, read N- to C-terminus: Large ribosomal subunit protein uL10 (163 aa).

This sequence belongs to the universal ribosomal protein uL10 family. In terms of assembly, part of the ribosomal stalk of the 50S ribosomal subunit. The N-terminus interacts with L11 and the large rRNA to form the base of the stalk. The C-terminus forms an elongated spine to which L12 dimers bind in a sequential fashion forming a multimeric L10(L12)X complex.

Its function is as follows. Forms part of the ribosomal stalk, playing a central role in the interaction of the ribosome with GTP-bound translation factors. In Haemophilus ducreyi (strain 35000HP / ATCC 700724), this protein is Large ribosomal subunit protein uL10.